A 529-amino-acid chain; its full sequence is Probable anion transporter 1, chloroplastic (529 aa).

A chloroplast-targeting transit peptide spans 1–55 (MLYLLPLSVSCRVPGSPPAPRSRRFLDPGGGRGVGDGLGGVRVFRRRALRGTDVR). Disordered regions lie at residues 13–39 (VPGS…DGLG) and 52–78 (TDVR…GGYG). The segment covering 28–39 (PGGGRGVGDGLG) has biased composition (gly residues). Residues 67-76 (RHDDARHDGG) show a composition bias toward basic and acidic residues. Transmembrane regions (helical) follow at residues 120-140 (WAIV…RVNM), 158-178 (VGLI…AGGI), 187-207 (TVLG…PFAA), 209-229 (LGLP…GVAM), 251-271 (LVYS…PLLI), 274-294 (FGWP…FSTW), 340-360 (VWAL…LLTW), 378-398 (LFCV…GWIA), 418-438 (IGFL…SPAM), 469-489 (AGVL…FGTA), and 503-523 (VFKV…LFST).

The protein belongs to the major facilitator superfamily. Sodium/anion cotransporter (TC 2.A.1.14) family.

It localises to the plastid. The protein localises to the chloroplast membrane. Probable anion transporter. This chain is Probable anion transporter 1, chloroplastic (PHT4;1), found in Oryza sativa subsp. japonica (Rice).